The chain runs to 267 residues: 4-hydroxy-tetrahydrodipicolinate reductase (267 aa).

NAD(+) is bound by residues 8-13 (GAAGRM) and Asp-34. Arg-35 serves as a coordination point for NADP(+). Residues 98 to 100 (GTT) and 122 to 125 (AANF) contribute to the NAD(+) site. The active-site Proton donor/acceptor is the His-155. His-156 contacts (S)-2,3,4,5-tetrahydrodipicolinate. Residue Lys-159 is the Proton donor of the active site. 165 to 166 (GT) lines the (S)-2,3,4,5-tetrahydrodipicolinate pocket.

This sequence belongs to the DapB family.

The protein resides in the cytoplasm. It catalyses the reaction (S)-2,3,4,5-tetrahydrodipicolinate + NAD(+) + H2O = (2S,4S)-4-hydroxy-2,3,4,5-tetrahydrodipicolinate + NADH + H(+). The catalysed reaction is (S)-2,3,4,5-tetrahydrodipicolinate + NADP(+) + H2O = (2S,4S)-4-hydroxy-2,3,4,5-tetrahydrodipicolinate + NADPH + H(+). It functions in the pathway amino-acid biosynthesis; L-lysine biosynthesis via DAP pathway; (S)-tetrahydrodipicolinate from L-aspartate: step 4/4. Its function is as follows. Catalyzes the conversion of 4-hydroxy-tetrahydrodipicolinate (HTPA) to tetrahydrodipicolinate. This is 4-hydroxy-tetrahydrodipicolinate reductase from Pseudomonas putida (strain ATCC 700007 / DSM 6899 / JCM 31910 / BCRC 17059 / LMG 24140 / F1).